A 468-amino-acid chain; its full sequence is Tubulin gamma chain (468 aa).

Residue 142–148 (AGGTGSG) coordinates GTP.

Belongs to the tubulin family.

It localises to the cytoplasm. The protein resides in the cytoskeleton. Its subcellular location is the microtubule organizing center. Functionally, tubulin is the major constituent of microtubules. The gamma chain is found at microtubule organizing centers (MTOC) such as the spindle poles, suggesting that it is involved in the minus-end nucleation of microtubule assembly. The chain is Tubulin gamma chain (TUBG) from Chlamydomonas reinhardtii (Chlamydomonas smithii).